We begin with the raw amino-acid sequence, 577 residues long: MDRYEQVTELARRRGFMWPSFELYGGAAGFYDYGPLGARLKRRIEDIWRRFFVIGEGFAEIECPTIGIEEVFRASGHLSGFSDPLTECKECKEIYRADHLIKHIVEVPDALSAEEIYRMIKENDITCPECGGELSEVYEFNLMFRTAIGPGNRHPGYLRPETAQGMFINFQRLLRYYRDSLPFGAVQIGRSYRNEISPRQGVIRLREFSQAEAEVFIDPRNKQHPRFSEVKDLRLRLYSREAQERGQVEEMSVGEAVERGIIAHEILAYFVARTYEYLLAVGVDRERLRFRQHKADEMAHYAADCWDAEVLLDRLGWIEIVGIADRTDYDLRSHMALSKANLSVFVHYPEPVRRKRVAVKPDMKVLGPRFKGRAKAIADALQAMSVADLKGDTIKITVDGETYEIERRLVSVEEIEEEIRGEYVVPHVIEPSFGIDRILYTVLEHSYHEEPVEDEMRVVLRFLPGISPIDVAILPLMDKDELVEPARRIFDEFRRCGMLAEFDTSGSIGRRYRRNDEIGTPYCITVDYQTLEDGTVTVRDRDTMQQIRIEADRAVDIIRDLMSGALCFSEAGMPVKS.

Positions 96 and 161 each coordinate substrate. ATP contacts are provided by residues 193–195 (RNE), 203–208 (IRLREF), 319–320 (EI), and 434–437 (GIDR). 208–212 (FSQAE) serves as a coordination point for substrate. 430-434 (EPSFG) contributes to the substrate binding site.

It belongs to the class-II aminoacyl-tRNA synthetase family.

It is found in the cytoplasm. It carries out the reaction tRNA(Gly) + glycine + ATP = glycyl-tRNA(Gly) + AMP + diphosphate. In terms of biological role, catalyzes the attachment of glycine to tRNA(Gly). This Methanothrix thermoacetophila (strain DSM 6194 / JCM 14653 / NBRC 101360 / PT) (Methanosaeta thermophila) protein is Glycine--tRNA ligase.